Here is a 419-residue protein sequence, read N- to C-terminus: Putative zinc metalloprotease spyM18_2031 (419 aa).

Histidine 18 is a binding site for Zn(2+). Glutamate 19 is an active-site residue. Histidine 22 lines the Zn(2+) pocket. Helical transmembrane passes span 169–191, 301–323, 343–365, and 392–411; these read LITN…ILLV, LAWS…FSLN, LESV…LIPI, and AYIT…AVTW. The PDZ domain maps to 175 to 274; the sequence is GPMNNFILGI…LKTVAVKPQK (100 aa).

The protein belongs to the peptidase M50B family. Requires Zn(2+) as cofactor.

Its subcellular location is the cell membrane. The polypeptide is Putative zinc metalloprotease spyM18_2031 (Streptococcus pyogenes serotype M18 (strain MGAS8232)).